The primary structure comprises 288 residues: Energy-coupling factor transporter ATP-binding protein EcfA2 (288 aa).

Residues 3-246 (IKLEQLGYCY…PDELVDLGLS (244 aa)) form the ABC transporter domain. 40–47 (GHTGSGKS) lines the ATP pocket.

Belongs to the ABC transporter superfamily. Energy-coupling factor EcfA family. As to quaternary structure, forms a stable energy-coupling factor (ECF) transporter complex composed of 2 membrane-embedded substrate-binding proteins (S component), 2 ATP-binding proteins (A component) and 2 transmembrane proteins (T component).

The protein resides in the cell membrane. ATP-binding (A) component of a common energy-coupling factor (ECF) ABC-transporter complex. Unlike classic ABC transporters this ECF transporter provides the energy necessary to transport a number of different substrates. The chain is Energy-coupling factor transporter ATP-binding protein EcfA2 from Listeria monocytogenes serovar 1/2a (strain ATCC BAA-679 / EGD-e).